Consider the following 503-residue polypeptide: MKPAIALEGISKSFPGVRALSDVSLALYPGSVTALVGENGAGKSTLVKILTGIYQPDAGTIRLGDTETTFPTALAASRAGVTAIHQETVLFDELSVAENIFLGHAPRNRFGLIDWKQLNADAQALLGRAGADFDPTIRLRDLGIAKKHLVAIARALSVDARVVIMDEPTAALSHKEIHELYDLIERLKADGKAVLFISHKFDEIFRIADRYTVFRDGAMIGEGLIADVSQDDLVRMMVGRAVGSVYPKKEVTIGQPVLTVSGYRHPTEFEDINFELRRGEILGFYGLVGAGRSEFMQSLIGITRPSAGAVKLDGEVLVIRSPAEAIRAGIVYVPEERGRQGAIIGMPIFQNVTLPSLSHTSRSGFLRLAEEFALAREYTSRLDLRAAALDQDVGTLSGGNQQKVVIAKWLATRPKVIILDEPTKGIDIGSKAAVHAFMSELAAQGLSVIMVSSEIPEIMGMSDRVIVMREGRVAGRYERSELTAEKLVRAAAGIETQADGRAA.

ABC transporter domains follow at residues 5–241 (IALE…VGRA) and 253–495 (IGQP…AGIE). An ATP-binding site is contributed by 37–44 (GENGAGKS).

Belongs to the ABC transporter superfamily. Ribose importer (TC 3.A.1.2.1) family. In terms of assembly, the complex is composed of an ATP-binding protein (RbsA), two transmembrane proteins (RbsC) and a solute-binding protein (RbsB).

The protein resides in the cell inner membrane. It carries out the reaction D-ribose(out) + ATP + H2O = D-ribose(in) + ADP + phosphate + H(+). In terms of biological role, part of the ABC transporter complex RbsABC involved in ribose import. Responsible for energy coupling to the transport system. In Rhizobium meliloti (strain 1021) (Ensifer meliloti), this protein is Ribose import ATP-binding protein RbsA 1.